The following is a 160-amino-acid chain: SsrA-binding protein (160 aa).

The tract at residues 131-160 is disordered; that stretch reads KKEYDKRHTERERDSDRELQRAVRSKGKDD.

It belongs to the SmpB family.

The protein localises to the cytoplasm. Required for rescue of stalled ribosomes mediated by trans-translation. Binds to transfer-messenger RNA (tmRNA), required for stable association of tmRNA with ribosomes. tmRNA and SmpB together mimic tRNA shape, replacing the anticodon stem-loop with SmpB. tmRNA is encoded by the ssrA gene; the 2 termini fold to resemble tRNA(Ala) and it encodes a 'tag peptide', a short internal open reading frame. During trans-translation Ala-aminoacylated tmRNA acts like a tRNA, entering the A-site of stalled ribosomes, displacing the stalled mRNA. The ribosome then switches to translate the ORF on the tmRNA; the nascent peptide is terminated with the 'tag peptide' encoded by the tmRNA and targeted for degradation. The ribosome is freed to recommence translation, which seems to be the essential function of trans-translation. The protein is SsrA-binding protein of Pseudomonas syringae pv. syringae (strain B728a).